A 309-amino-acid polypeptide reads, in one-letter code: Porphobilinogen deaminase (309 aa).

An S-(dipyrrolylmethanemethyl)cysteine modification is found at cysteine 242.

It belongs to the HMBS family. As to quaternary structure, monomer. Dipyrromethane serves as cofactor.

It carries out the reaction 4 porphobilinogen + H2O = hydroxymethylbilane + 4 NH4(+). Its pathway is porphyrin-containing compound metabolism; protoporphyrin-IX biosynthesis; coproporphyrinogen-III from 5-aminolevulinate: step 2/4. Tetrapolymerization of the monopyrrole PBG into the hydroxymethylbilane pre-uroporphyrinogen in several discrete steps. This Legionella pneumophila (strain Lens) protein is Porphobilinogen deaminase.